We begin with the raw amino-acid sequence, 209 residues long: Guanylate kinase (209 aa).

The Guanylate kinase-like domain occupies 5 to 184 (GLLIVFSGPS…AAERVKRVIE (180 aa)). 12-19 (GPSGVGKG) is an ATP binding site.

This sequence belongs to the guanylate kinase family.

Its subcellular location is the cytoplasm. The enzyme catalyses GMP + ATP = GDP + ADP. In terms of biological role, essential for recycling GMP and indirectly, cGMP. This Streptococcus thermophilus (strain CNRZ 1066) protein is Guanylate kinase.